The chain runs to 186 residues: Ribosome-recycling factor (186 aa).

This sequence belongs to the RRF family.

The protein resides in the cytoplasm. In terms of biological role, responsible for the release of ribosomes from messenger RNA at the termination of protein biosynthesis. May increase the efficiency of translation by recycling ribosomes from one round of translation to another. This is Ribosome-recycling factor from Cupriavidus taiwanensis (strain DSM 17343 / BCRC 17206 / CCUG 44338 / CIP 107171 / LMG 19424 / R1) (Ralstonia taiwanensis (strain LMG 19424)).